The sequence spans 372 residues: Chorismate synthase (372 aa).

Residues Arg48 and Arg54 each coordinate NADP(+). Residues 125–127 (RSS), 238–239 (NA), Gly278, 293–297 (KPTSS), and Arg319 each bind FMN.

Belongs to the chorismate synthase family. As to quaternary structure, homotetramer. Requires FMNH2 as cofactor.

It catalyses the reaction 5-O-(1-carboxyvinyl)-3-phosphoshikimate = chorismate + phosphate. It participates in metabolic intermediate biosynthesis; chorismate biosynthesis; chorismate from D-erythrose 4-phosphate and phosphoenolpyruvate: step 7/7. Its function is as follows. Catalyzes the anti-1,4-elimination of the C-3 phosphate and the C-6 proR hydrogen from 5-enolpyruvylshikimate-3-phosphate (EPSP) to yield chorismate, which is the branch point compound that serves as the starting substrate for the three terminal pathways of aromatic amino acid biosynthesis. This reaction introduces a second double bond into the aromatic ring system. This chain is Chorismate synthase, found in Xylella fastidiosa (strain M23).